Consider the following 291-residue polypeptide: ATP synthase gamma chain (291 aa).

This sequence belongs to the ATPase gamma chain family. In terms of assembly, F-type ATPases have 2 components, CF(1) - the catalytic core - and CF(0) - the membrane proton channel. CF(1) has five subunits: alpha(3), beta(3), gamma(1), delta(1), epsilon(1). CF(0) has three main subunits: a, b and c.

The protein localises to the cell inner membrane. Its function is as follows. Produces ATP from ADP in the presence of a proton gradient across the membrane. The gamma chain is believed to be important in regulating ATPase activity and the flow of protons through the CF(0) complex. The protein is ATP synthase gamma chain of Sinorhizobium medicae (strain WSM419) (Ensifer medicae).